A 209-amino-acid polypeptide reads, in one-letter code: Uridine kinase (209 aa).

12 to 19 (GGSGSGKT) is a binding site for ATP.

It belongs to the uridine kinase family.

The protein resides in the cytoplasm. It catalyses the reaction uridine + ATP = UMP + ADP + H(+). It carries out the reaction cytidine + ATP = CMP + ADP + H(+). It functions in the pathway pyrimidine metabolism; CTP biosynthesis via salvage pathway; CTP from cytidine: step 1/3. It participates in pyrimidine metabolism; UMP biosynthesis via salvage pathway; UMP from uridine: step 1/1. The polypeptide is Uridine kinase (Listeria monocytogenes serotype 4b (strain CLIP80459)).